Here is a 308-residue protein sequence, read N- to C-terminus: Pantothenate kinase (308 aa).

93–100 (GSVAVGKS) is an ATP binding site.

It belongs to the prokaryotic pantothenate kinase family.

The protein resides in the cytoplasm. The catalysed reaction is (R)-pantothenate + ATP = (R)-4'-phosphopantothenate + ADP + H(+). It functions in the pathway cofactor biosynthesis; coenzyme A biosynthesis; CoA from (R)-pantothenate: step 1/5. This is Pantothenate kinase from Corynebacterium aurimucosum (strain ATCC 700975 / DSM 44827 / CIP 107346 / CN-1) (Corynebacterium nigricans).